A 603-amino-acid polypeptide reads, in one-letter code: Elongation factor 4 (603 aa).

One can recognise a tr-type G domain in the interval 7–189 (VRIRNFCIIA…AVVERIPPPP (183 aa)). GTP contacts are provided by residues 19 to 24 (DHGKST) and 136 to 139 (NKID).

The protein belongs to the TRAFAC class translation factor GTPase superfamily. Classic translation factor GTPase family. LepA subfamily.

The protein resides in the cell inner membrane. It catalyses the reaction GTP + H2O = GDP + phosphate + H(+). Functionally, required for accurate and efficient protein synthesis under certain stress conditions. May act as a fidelity factor of the translation reaction, by catalyzing a one-codon backward translocation of tRNAs on improperly translocated ribosomes. Back-translocation proceeds from a post-translocation (POST) complex to a pre-translocation (PRE) complex, thus giving elongation factor G a second chance to translocate the tRNAs correctly. Binds to ribosomes in a GTP-dependent manner. The protein is Elongation factor 4 of Nostoc punctiforme (strain ATCC 29133 / PCC 73102).